Here is a 112-residue protein sequence, read N- to C-terminus: MNYSPGLVSLILLLLGRTRGDSVTQMEGPVTLSEEAFLTINCTYTATGYPSLFWYVQYPGEGLQLLLKATKADDKGSNKGFEATYRKETTSFHLEKGSVQVSDSAVYFCALS.

Positions 1 to 20 are cleaved as a signal peptide; that stretch reads MNYSPGLVSLILLLLGRTRG. In terms of domain architecture, Ig-like spans 21–112; it reads DSVTQMEGPV…DSAVYFCALS (92 aa). A glycan (N-linked (GlcNAc...) asparagine) is linked at Asn41. Cys42 and Cys109 are joined by a disulfide.

As to quaternary structure, alpha-beta TR is a heterodimer composed of an alpha and beta chain; disulfide-linked. The alpha-beta TR is associated with the transmembrane signaling CD3 coreceptor proteins to form the TR-CD3 (TcR or TCR). The assembly of alpha-beta TR heterodimers with CD3 occurs in the endoplasmic reticulum where a single alpha-beta TR heterodimer associates with one CD3D-CD3E heterodimer, one CD3G-CD3E heterodimer and one CD247 homodimer forming a stable octameric structure. CD3D-CD3E and CD3G-CD3E heterodimers preferentially associate with TR alpha and TR beta chains, respectively. The association of the CD247 homodimer is the last step of TcR assembly in the endoplasmic reticulum and is required for transport to the cell surface.

It localises to the cell membrane. Its function is as follows. V region of the variable domain of T cell receptor (TR) alpha chain that participates in the antigen recognition. Alpha-beta T cell receptors are antigen specific receptors which are essential to the immune response and are present on the cell surface of T lymphocytes. Recognize peptide-major histocompatibility (MH) (pMH) complexes that are displayed by antigen presenting cells (APC), a prerequisite for efficient T cell adaptive immunity against pathogens. Binding of alpha-beta TR to pMH complex initiates TR-CD3 clustering on the cell surface and intracellular activation of LCK that phosphorylates the ITAM motifs of CD3G, CD3D, CD3E and CD247 enabling the recruitment of ZAP70. In turn ZAP70 phosphorylates LAT, which recruits numerous signaling molecules to form the LAT signalosome. The LAT signalosome propagates signal branching to three major signaling pathways, the calcium, the mitogen-activated protein kinase (MAPK) kinase and the nuclear factor NF-kappa-B (NF-kB) pathways, leading to the mobilization of transcription factors that are critical for gene expression and essential for T cell growth and differentiation. The T cell repertoire is generated in the thymus, by V-(D)-J rearrangement. This repertoire is then shaped by intrathymic selection events to generate a peripheral T cell pool of self-MH restricted, non-autoaggressive T cells. Post-thymic interaction of alpha-beta TR with the pMH complexes shapes TR structural and functional avidity. This chain is T cell receptor alpha variable 9-2, found in Homo sapiens (Human).